We begin with the raw amino-acid sequence, 252 residues long: 5'-nucleotidase SurE (252 aa).

Residues aspartate 8, aspartate 9, serine 39, and asparagine 91 each contribute to the a divalent metal cation site.

It belongs to the SurE nucleotidase family. A divalent metal cation is required as a cofactor.

Its subcellular location is the cytoplasm. The catalysed reaction is a ribonucleoside 5'-phosphate + H2O = a ribonucleoside + phosphate. In terms of biological role, nucleotidase that shows phosphatase activity on nucleoside 5'-monophosphates. The chain is 5'-nucleotidase SurE from Bordetella petrii (strain ATCC BAA-461 / DSM 12804 / CCUG 43448).